A 164-amino-acid chain; its full sequence is Protein phosphatase 1 regulatory subunit 14C (164 aa).

Gly residues predominate over residues 1–19; sequence MSVVTGGGEAAGGTSGGGA. The tract at residues 1–72 is disordered; sequence MSVVTGGGEA…QRRHQQGKVT (72 aa). The residue at position 2 (S2) is an N-acetylserine. Phosphoserine is present on S25. Omega-N-methylarginine is present on R27. A Phosphoserine modification is found at S33. Positions 50–62 are enriched in low complexity; sequence VATVAAAGQVQQQ. Position 72 is a phosphothreonine; by ILK1 (T72).

This sequence belongs to the PP1 inhibitor family. In terms of processing, has over 600-fold higher inhibitory activity when phosphorylated, creating a molecular switch for regulating the phosphorylation status of PPP1CA substrates and smooth muscle contraction. The main inhibitory site appears to be Thr-72.

The protein localises to the endomembrane system. Its function is as follows. Inhibitor of the PP1 regulatory subunit PPP1CA. In Rattus norvegicus (Rat), this protein is Protein phosphatase 1 regulatory subunit 14C (Ppp1r14c).